Reading from the N-terminus, the 49-residue chain is Large ribosomal subunit protein bL33 (49 aa).

It belongs to the bacterial ribosomal protein bL33 family.

This chain is Large ribosomal subunit protein bL33, found in Alkaliphilus metalliredigens (strain QYMF).